The primary structure comprises 339 residues: Retinol dehydrogenase 10-A (339 aa).

Residues 3–23 (IFVEFFLVMLKVCWAIVMAGF) form a helical; Signal-anchor membrane-spanning segment. 40-64 (VITGAGGGLGRLFAKEFARRRATLV) contributes to the NADP(+) binding site. Serine 195 serves as a coordination point for substrate. Catalysis depends on tyrosine 208, which acts as the Proton acceptor.

It belongs to the short-chain dehydrogenases/reductases (SDR) family.

It localises to the microsome membrane. Its subcellular location is the endoplasmic reticulum membrane. It carries out the reaction all-trans-retinol + NADP(+) = all-trans-retinal + NADPH + H(+). It participates in cofactor metabolism; retinol metabolism. Retinol dehydrogenase with a clear preference for NADP. Converts all-trans-retinol to all-trans-retinal. Has no detectable activity towards 11-cis-retinol, 9-cis-retinol and 13-cis-retinol. This chain is Retinol dehydrogenase 10-A (rdh10a), found in Danio rerio (Zebrafish).